The sequence spans 267 residues: 3-methyl-2-oxobutanoate hydroxymethyltransferase (267 aa).

Mg(2+) is bound by residues aspartate 46 and aspartate 85. 3-methyl-2-oxobutanoate-binding positions include 46–47 (DS), aspartate 85, and lysine 115. Glutamate 117 provides a ligand contact to Mg(2+). Residue glutamate 184 is the Proton acceptor of the active site.

This sequence belongs to the PanB family. In terms of assembly, homodecamer; pentamer of dimers. The cofactor is Mg(2+).

It is found in the cytoplasm. It carries out the reaction 3-methyl-2-oxobutanoate + (6R)-5,10-methylene-5,6,7,8-tetrahydrofolate + H2O = 2-dehydropantoate + (6S)-5,6,7,8-tetrahydrofolate. It participates in cofactor biosynthesis; (R)-pantothenate biosynthesis; (R)-pantoate from 3-methyl-2-oxobutanoate: step 1/2. In terms of biological role, catalyzes the reversible reaction in which hydroxymethyl group from 5,10-methylenetetrahydrofolate is transferred onto alpha-ketoisovalerate to form ketopantoate. The protein is 3-methyl-2-oxobutanoate hydroxymethyltransferase of Geobacter metallireducens (strain ATCC 53774 / DSM 7210 / GS-15).